A 121-amino-acid chain; its full sequence is Non-specific lipid-transfer protein 9 (121 aa).

The signal sequence occupies residues 1 to 27 (MRKSISIAFVIAITIFMSHLNVFTVYS). 4 disulfide bridges follow: C31–C80, C41–C57, C58–C102, and C78–C116.

It belongs to the plant LTP family.

Plant non-specific lipid-transfer proteins transfer phospholipids as well as galactolipids across membranes. May play a role in wax or cutin deposition in the cell walls of expanding epidermal cells and certain secretory tissues. The polypeptide is Non-specific lipid-transfer protein 9 (LTP9) (Arabidopsis thaliana (Mouse-ear cress)).